The primary structure comprises 276 residues: Phosphatidylglycerol--prolipoprotein diacylglyceryl transferase (276 aa).

7 consecutive transmembrane segments (helical) span residues 17 to 37 (LAIR…LWFG), 59 to 79 (MLFF…VLFY), 95 to 115 (WEGG…MWLF), 129 to 149 (FIAP…FING), 176 to 196 (SQLY…WLFA), 202 to 222 (MGAV…AAEF), and 237 to 257 (LSMG…MVVW). Arg-142 contributes to the a 1,2-diacyl-sn-glycero-3-phospho-(1'-sn-glycerol) binding site.

The protein belongs to the Lgt family.

It is found in the cell inner membrane. The catalysed reaction is L-cysteinyl-[prolipoprotein] + a 1,2-diacyl-sn-glycero-3-phospho-(1'-sn-glycerol) = an S-1,2-diacyl-sn-glyceryl-L-cysteinyl-[prolipoprotein] + sn-glycerol 1-phosphate + H(+). It participates in protein modification; lipoprotein biosynthesis (diacylglyceryl transfer). Functionally, catalyzes the transfer of the diacylglyceryl group from phosphatidylglycerol to the sulfhydryl group of the N-terminal cysteine of a prolipoprotein, the first step in the formation of mature lipoproteins. The chain is Phosphatidylglycerol--prolipoprotein diacylglyceryl transferase from Cupriavidus pinatubonensis (strain JMP 134 / LMG 1197) (Cupriavidus necator (strain JMP 134)).